The chain runs to 296 residues: ATP synthase gamma chain (296 aa).

This sequence belongs to the ATPase gamma chain family. As to quaternary structure, F-type ATPases have 2 components, CF(1) - the catalytic core - and CF(0) - the membrane proton channel. CF(1) has five subunits: alpha(3), beta(3), gamma(1), delta(1), epsilon(1). CF(0) has three main subunits: a, b and c.

The protein resides in the cell inner membrane. Its function is as follows. Produces ATP from ADP in the presence of a proton gradient across the membrane. The gamma chain is believed to be important in regulating ATPase activity and the flow of protons through the CF(0) complex. The protein is ATP synthase gamma chain of Rhodopirellula baltica (strain DSM 10527 / NCIMB 13988 / SH1).